The primary structure comprises 265 residues: 1-(5-phosphoribosyl)-5-[(5-phosphoribosylamino)methylideneamino] imidazole-4-carboxamide isomerase (265 aa).

Asp-8 serves as the catalytic Proton acceptor. The Proton donor role is filled by Asp-139.

Belongs to the HisA/HisF family.

The protein resides in the cytoplasm. It carries out the reaction 1-(5-phospho-beta-D-ribosyl)-5-[(5-phospho-beta-D-ribosylamino)methylideneamino]imidazole-4-carboxamide = 5-[(5-phospho-1-deoxy-D-ribulos-1-ylimino)methylamino]-1-(5-phospho-beta-D-ribosyl)imidazole-4-carboxamide. It functions in the pathway amino-acid biosynthesis; L-histidine biosynthesis; L-histidine from 5-phospho-alpha-D-ribose 1-diphosphate: step 4/9. The polypeptide is 1-(5-phosphoribosyl)-5-[(5-phosphoribosylamino)methylideneamino] imidazole-4-carboxamide isomerase (Herminiimonas arsenicoxydans).